A 366-amino-acid chain; its full sequence is Phospho-N-acetylmuramoyl-pentapeptide-transferase (366 aa).

A run of 10 helical transmembrane segments spans residues Ala27–Leu47, Thr71–Ala91, Leu93–Phe113, Leu134–Ser154, Leu174–Gly194, Gly205–Ala225, Leu245–Pro265, Ala268–Val288, Val297–Phe317, and Gln343–Leu363.

It belongs to the glycosyltransferase 4 family. MraY subfamily. Mg(2+) serves as cofactor.

Its subcellular location is the cell inner membrane. The enzyme catalyses UDP-N-acetyl-alpha-D-muramoyl-L-alanyl-gamma-D-glutamyl-meso-2,6-diaminopimeloyl-D-alanyl-D-alanine + di-trans,octa-cis-undecaprenyl phosphate = di-trans,octa-cis-undecaprenyl diphospho-N-acetyl-alpha-D-muramoyl-L-alanyl-D-glutamyl-meso-2,6-diaminopimeloyl-D-alanyl-D-alanine + UMP. Its pathway is cell wall biogenesis; peptidoglycan biosynthesis. Catalyzes the initial step of the lipid cycle reactions in the biosynthesis of the cell wall peptidoglycan: transfers peptidoglycan precursor phospho-MurNAc-pentapeptide from UDP-MurNAc-pentapeptide onto the lipid carrier undecaprenyl phosphate, yielding undecaprenyl-pyrophosphoryl-MurNAc-pentapeptide, known as lipid I. This chain is Phospho-N-acetylmuramoyl-pentapeptide-transferase, found in Sinorhizobium fredii (strain NBRC 101917 / NGR234).